The following is a 252-amino-acid chain: Carbohydrate deacetylase (252 aa).

2 residues coordinate Mg(2+): His-59 and His-122.

This sequence belongs to the YdjC deacetylase family. As to quaternary structure, homodimer. Requires Mg(2+) as cofactor.

Its function is as follows. Probably catalyzes the deacetylation of acetylated carbohydrates an important step in the degradation of oligosaccharides. This chain is Carbohydrate deacetylase, found in Vibrio cholerae serotype O1 (strain ATCC 39315 / El Tor Inaba N16961).